Reading from the N-terminus, the 284-residue chain is Tripartite motif-containing protein 12A (284 aa).

The segment at C15–R59 adopts an RING-type zinc-finger fold. The segment at Q91–I132 adopts a B box-type zinc-finger fold. Residues C96, H99, C118, and H124 each contribute to the Zn(2+) site. Positions A130–S234 form a coiled coil.

The protein belongs to the TRIM/RBCC family. Expressed in embryonic CNS, liver, kidney, olfactory epithelium.

Its subcellular location is the cytoplasm. The chain is Tripartite motif-containing protein 12A (Trim12a) from Mus musculus (Mouse).